A 430-amino-acid polypeptide reads, in one-letter code: GTPase Obg (430 aa).

One can recognise an Obg domain in the interval Met1 to Leu158. Residues Arg118–Pro145 are disordered. The region spanning Ala159–Glu329 is the OBG-type G domain. GTP-binding positions include Gly165–Ser172, Phe190–Lys194, Asp212–Gly215, Asn282–Asp285, and Ser310–Ile312. The Mg(2+) site is built by Ser172 and Thr192. The OCT domain maps to Lys352–Glu430.

This sequence belongs to the TRAFAC class OBG-HflX-like GTPase superfamily. OBG GTPase family. Monomer. Requires Mg(2+) as cofactor.

It is found in the cytoplasm. In terms of biological role, an essential GTPase which binds GTP, GDP and possibly (p)ppGpp with moderate affinity, with high nucleotide exchange rates and a fairly low GTP hydrolysis rate. Plays a role in control of the cell cycle, stress response, ribosome biogenesis and in those bacteria that undergo differentiation, in morphogenesis control. The protein is GTPase Obg of Staphylococcus epidermidis (strain ATCC 35984 / DSM 28319 / BCRC 17069 / CCUG 31568 / BM 3577 / RP62A).